Here is a 148-residue protein sequence, read N- to C-terminus: MFRGSTQLSLDSKGRLAIPAKYRDELFASCGGNIVVTADPSRCLLIYPQPVWEPIEKKLNSFPSLSPQIRSLQRLIIGNASDVEMDSSGRILISAPLRQFAGLQKEVVLAGQGEKFELWDMAKWDLEIDTATTYKDGDIPPELEGFSL.

2 consecutive SpoVT-AbrB domains span residues 5–51 and 80–123; these read STQL…PQPV and ASDV…DMAK.

This sequence belongs to the MraZ family. As to quaternary structure, forms oligomers.

The protein localises to the cytoplasm. It localises to the nucleoid. This is Transcriptional regulator MraZ from Nitrosomonas europaea (strain ATCC 19718 / CIP 103999 / KCTC 2705 / NBRC 14298).